The following is a 79-amino-acid chain: Cytochrome b (79 aa).

Transmembrane regions (helical) follow at residues 1–7, 31–52, and 67–79; these read TALFLAM, WLIR…YLHI, and WNIG…LTMM. Residues H37 and H51 each contribute to the heme b site.

It belongs to the cytochrome b family. As to quaternary structure, the cytochrome bc1 complex contains 3 respiratory subunits (MT-CYB, CYC1 and UQCRFS1), 2 core proteins (UQCRC1 and UQCRC2) and probably 6 low-molecular weight proteins. The cofactor is heme b.

It is found in the mitochondrion inner membrane. Functionally, component of the ubiquinol-cytochrome c reductase complex (complex III or cytochrome b-c1 complex) that is part of the mitochondrial respiratory chain. The b-c1 complex mediates electron transfer from ubiquinol to cytochrome c. Contributes to the generation of a proton gradient across the mitochondrial membrane that is then used for ATP synthesis. The sequence is that of Cytochrome b (mt-cyb) from Julidochromis regani (Convict julie).